A 629-amino-acid chain; its full sequence is (-)-alpha-pinene synthase, chloroplastic (629 aa).

A chloroplast-targeting transit peptide spans 1–48; the sequence is MSPVSVISLPSDLCLPTSFIDRSGRELIPLHITIPNVAMRRQGKLMTR. Residues D380, D384, and D532 each coordinate Mg(2+). The DDXXD motif motif lies at 380-384; it reads DDMYD. S540 provides a ligand contact to K(+).

It belongs to the terpene synthase family. Tpsd subfamily. The cofactor is Mg(2+). It depends on Mn(2+) as a cofactor. K(+) serves as cofactor.

Its subcellular location is the plastid. The protein localises to the chloroplast. The catalysed reaction is (2E)-geranyl diphosphate = (1S,5S)-alpha-pinene + diphosphate. It functions in the pathway terpene metabolism; oleoresin biosynthesis. Functionally, involved in defensive oleoresin formation in conifers in response to insect attack or other injury. Involved in monoterpene (C10) olefins biosynthesis. Produces mainly (-)-alpha-pinene (79%) and lesser amounts of (-)-beta-pinene (4.2%), nearly racemic mixtures of camphene (2.8% (+)/2.2% (-)) and limonene (2.4% (+)/3.7% (-)), as well as small amounts of (+)-alpha-pinene (3.3%) and (+)-beta-pinene (2.4%). This is (-)-alpha-pinene synthase, chloroplastic (PT1) from Pinus taeda (Loblolly pine).